Consider the following 827-residue polypeptide: MLLCLSPAWLMKVPAPGQPGEAALLVSKAVSFHPGGLTFLDDFVPPRRATYFLAGLGLGPGRGREAAELARDLTCPTGASAELARLLEDRLLTRQLLAQQGGVAVPATLAFTYKPPGLLRGGDASLGLRLVELSGKEGQETLVKEEVEAFLRSEALGDILQVAVKLSGWRWRGRQAWRLHPRAELGAVVDTVLALLEKLEEEESVLVEAVYPPAQLPCSDGPSPGPGLAVRICAVVCRTQGDRPLLSKVVCGVGRGDRPLRHHNSLPRTLEVALAQCGLGEEAQVAAVRQRVKAAAEAALAAVLALEAGLSAEQRGGRRAHTDFLGVDFALTAAGGVLTPVALELNGGLCLEACGALEGLWAAPRLGPAADEAVAAPLVETMLRRSARCLMEGKQLLVVGAGGVSKKFVWEAARDYGLQLHLVESDPNHFASQLVQTFIHFDMTEHRRDEENARLLAELVRARGLKLDGCFSYWDDCLVLTALLCQELGLPCSSPAAMRLAKQKSLTQLHLLHHHGPPWPAPSLHAVPCCPLESEADVERAVHQVPLPGVMKLEFGAGAVGVRLVEDAPQCHEHFSRITRDLQGEADHPGIGLGWGNAMLLMEFVEGTEHDVDLVLFGGRLLAAFVSDNGPTRLPGFTETAACMPTGLAPEQEAQMVQAAFRCCLGCGLLDGVFNVELKLTGAGPRLIEINPRMGGFYLRDWILELYGVDLLLAAVMVACGLRPALPTRPRARGHLVGVMCLVSQHLQALSSTASRETLQALHDRGLLRLNLLEEALVPGEYEEPYCSVACAGPSPTEARLRLLGLCQGLGIDGPSYPVAHFLSHFK.

The ATP-grasp domain maps to 516-720 (GPPWPAPSLH…LLLAAVMVAC (205 aa)). 542 to 611 (VHQVPLPGVM…MEFVEGTEHD (70 aa)) contributes to the ATP binding site. Glutamate 677, glutamate 689, and asparagine 691 together coordinate Mg(2+). Mn(2+) contacts are provided by glutamate 677, glutamate 689, and asparagine 691.

As to quaternary structure, homotetramer. Mg(2+) serves as cofactor. Requires Mn(2+) as cofactor.

The catalysed reaction is beta-alanine + L-histidine + ATP = carnosine + ADP + phosphate + H(+). It catalyses the reaction 4-aminobutanoate + L-histidine + ATP = L-homocarnosine + ADP + phosphate + H(+). In terms of biological role, catalyzes the synthesis of carnosine and homocarnosine. Carnosine is synthesized more efficiently than homocarnosine. This chain is Carnosine synthase 1, found in Homo sapiens (Human).